A 257-amino-acid chain; its full sequence is Kallikrein-1 (257 aa).

A signal peptide spans 1–18 (MWFLVLCLALSLGGTGRA). The propeptide at 19–24 (PPIQSR) is activation peptide. One can recognise a Peptidase S1 domain in the interval 25–254 (IVGGWECSQP…YVKWIEDTIA (230 aa)). Disulfide bonds link Cys-31–Cys-169, Cys-47–Cys-63, Cys-148–Cys-215, Cys-180–Cys-194, and Cys-205–Cys-230. The Charge relay system role is filled by His-62. Ser-90 carries O-linked (GalNAc...) serine glycosylation. Residue Asn-99 is glycosylated (N-linked (GlcNAc...) asparagine). Ser-101 is a glycosylation site (O-linked (GalNAc...) serine). Residue Asn-105 is glycosylated (N-linked (GlcNAc...) asparagine). The Charge relay system role is filled by Asp-116. N-linked (GlcNAc...) asparagine glycosylation occurs at Asn-160. Ser-162 carries an O-linked (GalNAc...) serine glycan. The active-site Charge relay system is Ser-209.

It belongs to the peptidase S1 family. Kallikrein subfamily.

The enzyme catalyses Preferential cleavage of Arg-|-Xaa bonds in small molecule substrates. Highly selective action to release kallidin (lysyl-bradykinin) from kininogen involves hydrolysis of Met-|-Xaa or Leu-|-Xaa.. Glandular kallikreins cleave Met-Lys and Arg-Ser bonds in kininogen to release Lys-bradykinin. This is Kallikrein-1 (KLK1) from Macaca fascicularis (Crab-eating macaque).